The chain runs to 456 residues: Outer membrane efflux protein BepC (456 aa).

An N-terminal signal peptide occupies residues 1 to 28; sequence MRYTVFKACKELVAAAVLLSGTVLTGQA. Positions 312–341 form a coiled coil; the sequence is RTSAQIRQSKEQLGQARIEVDVVQDKVRQA.

This sequence belongs to the outer membrane factor (OMF) (TC 1.B.17) family. As to quaternary structure, probably part of a tripartite efflux pump, which is composed of an outer membrane efflux protein, an inner membrane protein and a protein that expands the periplasmic space. Could form a tripartite pump with BepD and BepE or with BepF and BepG.

The protein resides in the cell outer membrane. Its function is as follows. Involved in the efflux of toxic and relatively hydrophobic compounds. Influences survival inside the host. This chain is Outer membrane efflux protein BepC (bepC), found in Brucella suis biovar 1 (strain 1330).